Consider the following 235-residue polypeptide: LexA repressor (235 aa).

The H-T-H motif DNA-binding region spans 47-67 (IREIADAVGLTSTSSVAHQLR). Active-site for autocatalytic cleavage activity residues include Ser-159 and Lys-196.

Belongs to the peptidase S24 family. As to quaternary structure, homodimer.

It catalyses the reaction Hydrolysis of Ala-|-Gly bond in repressor LexA.. Its function is as follows. Represses a number of genes involved in the response to DNA damage (SOS response), including recA and lexA. In the presence of single-stranded DNA, RecA interacts with LexA causing an autocatalytic cleavage which disrupts the DNA-binding part of LexA, leading to derepression of the SOS regulon and eventually DNA repair. The sequence is that of LexA repressor from Mycobacterium leprae (strain Br4923).